Consider the following 312-residue polypeptide: Ribonuclease HIII (312 aa).

Residues 95–312 (MSILGSDEVG…TEKAFRLLKK (218 aa)) enclose the RNase H type-2 domain. A divalent metal cation contacts are provided by Asp101, Glu102, and Asp206.

Belongs to the RNase HII family. RnhC subfamily. It depends on Mn(2+) as a cofactor. Mg(2+) is required as a cofactor.

The protein resides in the cytoplasm. It carries out the reaction Endonucleolytic cleavage to 5'-phosphomonoester.. Functionally, endonuclease that specifically degrades the RNA of RNA-DNA hybrids. The sequence is that of Ribonuclease HIII from Bacillus mycoides (strain KBAB4) (Bacillus weihenstephanensis).